The primary structure comprises 238 residues: tRNA (guanine-N(7)-)-methyltransferase (238 aa).

4 residues coordinate S-adenosyl-L-methionine: E68, E93, D120, and D143. Residue D143 is part of the active site. Residues K147, D179, and 216–219 (TKFE) contribute to the substrate site.

It belongs to the class I-like SAM-binding methyltransferase superfamily. TrmB family.

It catalyses the reaction guanosine(46) in tRNA + S-adenosyl-L-methionine = N(7)-methylguanosine(46) in tRNA + S-adenosyl-L-homocysteine. It functions in the pathway tRNA modification; N(7)-methylguanine-tRNA biosynthesis. Functionally, catalyzes the formation of N(7)-methylguanine at position 46 (m7G46) in tRNA. This Aliivibrio fischeri (strain MJ11) (Vibrio fischeri) protein is tRNA (guanine-N(7)-)-methyltransferase.